A 133-amino-acid polypeptide reads, in one-letter code: FK506-binding protein 2 (133 aa).

The N-terminal stretch at 1-20 (MKLLYCLLLVILALVGLSSG) is a signal peptide. The region spanning 45–133 (GDKLKIHYTG…IFDVELIGIN (89 aa)) is the PPIase FKBP-type domain.

Belongs to the FKBP-type PPIase family.

It carries out the reaction [protein]-peptidylproline (omega=180) = [protein]-peptidylproline (omega=0). Inhibited by both FK506 and rapamycin. Its function is as follows. PPIases accelerate the folding of proteins by catalyzing the cis-trans isomerization of proline imidic peptide bonds in oligopeptides. The sequence is that of FK506-binding protein 2 (fkbp2) from Dictyostelium discoideum (Social amoeba).